Consider the following 2126-residue polypeptide: Polycystin family receptor for egg jelly (2126 aa).

A signal peptide spans 1-18 (MWPGPALLLLGLGLGLGS). At 19–1068 (QPPPTGPRGL…AIISNLTQNP (1050 aa)) the chain is on the extracellular side. Positions 20 to 71 (PPPTGPRGLPGVLRGAPGLGQGAESSVRGGDTGGLSPRAAPRHASPTPPRRC) are disordered. N-linked (GlcNAc...) asparagine glycans are attached at residues Asn-84, Asn-94, Asn-129, Asn-192, Asn-243, Asn-325, Asn-571, Asn-761, Asn-774, Asn-807, Asn-849, Asn-888, Asn-960, and Asn-1063. Positions 102–797 (CIMQPVKINR…SMMFCEFADD (696 aa)) constitute an REJ domain. The helical transmembrane segment at 1069 to 1089 (ATFLAVLFIMILYAILAFWAL) threads the bilayer. Over 1090 to 1273 (HRDVIDLYFR…VPKPFNRLQR (184 aa)) the chain is Cytoplasmic. The PLAT domain occupies 1114–1231 (LCYLVTIFTG…TLDATFSVTN (118 aa)). A helical transmembrane segment spans residues 1274 to 1294 (LSCCLAMLLSSLVCNIMFFNL). Residues 1295–1311 (NQKEKIESRHMHIIRSM) lie on the Extracellular side of the membrane. Residues 1312–1332 (LIGIESVVITIPVQLLITFFF) traverse the membrane as a helical segment. The Cytoplasmic segment spans residues 1333–1449 (TYSQKNLKMN…KTQIILPRWC (117 aa)). Positions 1379–1431 (RAAVSTSAPEEKEAFETSQKHEKADTQMSNKNSSNNNQEASEGVPPKAFSSQP) are disordered. A compositionally biased stretch (basic and acidic residues) spans 1387 to 1403 (PEEKEAFETSQKHEKAD). Residues 1450–1470 (VYIAWFLVFATSGISSFFIVF) form a helical membrane-spanning segment. Over 1471-1483 (YGVTYGYAKSIEW) the chain is Extracellular. A helical transmembrane segment spans residues 1484–1504 (LFASFCSFCQSVFLVQPCNIL). Residues 1505–1580 (LRSGTRSYKP…RRENRIRRRS (76 aa)) lie on the Cytoplasmic side of the membrane. The helical transmembrane segment at 1581-1601 (FLFLSYLVTHFIFLTLLLLLI) threads the bilayer. The Extracellular segment spans residues 1602-1838 (FSLRHNDSFY…DFNRKTSSEI (237 aa)). 4 N-linked (GlcNAc...) asparagine glycosylation sites follow: Asn-1607, Asn-1676, Asn-1766, and Asn-1817. A helical transmembrane segment spans residues 1839–1859 (YLYAAILIFFCAYVVDEGYII). Over 1860-1875 (RQERASYIRSVYNLLN) the chain is Cytoplasmic. Residues 1876-1896 (FSLKCMFALLIVLFFWKYFLA) form a helical membrane-spanning segment. Residues 1897-1918 (TKMVQLYLADPEAFIPFHAVSR) are Extracellular-facing. Residues 1919 to 1939 (VDHFMRIILAFLLFLTILKTL) form a helical membrane-spanning segment. At 1940 to 1964 (RYSRFFYNVRLAQKAIQAALPGICH) the chain is on the cytoplasmic side. A helical transmembrane segment spans residues 1965-1985 (TALVVSIYSFMYVAFGYLVFG). The Extracellular segment spans residues 1986–2019 (QHEWNYSNMIHATQTIFSYCVSAFQNTEFSGNKV). Residues 2020–2040 (LGVLFLSSFMLVMICIFINLF) form a helical membrane-spanning segment. Residues 2041–2126 (QAVILSAYDE…NGKKMIYLVV (86 aa)) lie on the Cytoplasmic side of the membrane.

It belongs to the polycystin family. In terms of tissue distribution, exclusively expressed in testis.

The protein resides in the cell membrane. Its subcellular location is the cytoplasmic vesicle. It localises to the secretory vesicle. It is found in the acrosome membrane. The protein localises to the nucleus. In terms of biological role, testis-specific protein that controls sperm transport and the timing of zona pellucida-evoked exocytosis of the sperm acrosome. The polypeptide is Polycystin family receptor for egg jelly (Pkdrej) (Mus musculus (Mouse)).